The chain runs to 335 residues: Legumin type B (335 aa).

Disordered regions lie at residues 47–87 (PETQ…GNSV) and 102–155 (TEED…GRNG). Positions 105–118 (DTAKRLRSPRDKRN) are enriched in basic and acidic residues. Residues 135 to 144 (QQEEEEQEEE) show a composition bias toward acidic residues. Residues 167 to 314 (ENIAQPARAD…AFGLRQRQVT (148 aa)) form the Cupin type-1 domain.

This sequence belongs to the 11S seed storage protein (globulins) family. As to quaternary structure, hexamer; each subunit is composed of an acidic and a basic chain derived from a single precursor and linked by a disulfide bond.

Its function is as follows. This protein found in the seeds of many leguminous and non-leguminous plants is the source of sulfur-containing amino acids in seed meals. The sequence is that of Legumin type B (LEB7) from Vicia faba (Broad bean).